The primary structure comprises 328 residues: tRNA(Ile)-lysidine synthase (328 aa).

35-40 (SGGADS) serves as a coordination point for ATP.

This sequence belongs to the tRNA(Ile)-lysidine synthase family.

Its subcellular location is the cytoplasm. It carries out the reaction cytidine(34) in tRNA(Ile2) + L-lysine + ATP = lysidine(34) in tRNA(Ile2) + AMP + diphosphate + H(+). Functionally, ligates lysine onto the cytidine present at position 34 of the AUA codon-specific tRNA(Ile) that contains the anticodon CAU, in an ATP-dependent manner. Cytidine is converted to lysidine, thus changing the amino acid specificity of the tRNA from methionine to isoleucine. In Polaromonas naphthalenivorans (strain CJ2), this protein is tRNA(Ile)-lysidine synthase.